A 104-amino-acid chain; its full sequence is Type IV secretion system protein PtlB homolog (104 aa).

A helical transmembrane segment spans residues 30–50 (IALLGIWFSIAFLALFPVALL).

Belongs to the virB3 family.

It localises to the cell membrane. The protein is Type IV secretion system protein PtlB homolog (ptlB) of Bordetella bronchiseptica (strain ATCC BAA-588 / NCTC 13252 / RB50) (Alcaligenes bronchisepticus).